A 448-amino-acid chain; its full sequence is Glutamyl-tRNA reductase (448 aa).

Residues 49 to 52 (TCNR), serine 109, 114 to 116 (ETQ), and glutamine 120 contribute to the substrate site. The Nucleophile role is filled by cysteine 50. 189-194 (GAGETG) contacts NADP(+). Positions 427–448 (PVDEVEETDATSAKAPLRALMR) are disordered.

Belongs to the glutamyl-tRNA reductase family. In terms of assembly, homodimer.

The enzyme catalyses (S)-4-amino-5-oxopentanoate + tRNA(Glu) + NADP(+) = L-glutamyl-tRNA(Glu) + NADPH + H(+). It participates in porphyrin-containing compound metabolism; protoporphyrin-IX biosynthesis; 5-aminolevulinate from L-glutamyl-tRNA(Glu): step 1/2. Catalyzes the NADPH-dependent reduction of glutamyl-tRNA(Glu) to glutamate 1-semialdehyde (GSA). The sequence is that of Glutamyl-tRNA reductase from Exiguobacterium sp. (strain ATCC BAA-1283 / AT1b).